Here is a 295-residue protein sequence, read N- to C-terminus: UDP-N-acetylenolpyruvoylglucosamine reductase (295 aa).

Positions 23–188 (QVGGPADFLA…ISAKFALKPG (166 aa)) constitute an FAD-binding PCMH-type domain. Arg167 is an active-site residue. The Proton donor role is filled by Ser217. Glu287 is a catalytic residue.

It belongs to the MurB family. Requires FAD as cofactor.

The protein resides in the cytoplasm. The enzyme catalyses UDP-N-acetyl-alpha-D-muramate + NADP(+) = UDP-N-acetyl-3-O-(1-carboxyvinyl)-alpha-D-glucosamine + NADPH + H(+). Its pathway is cell wall biogenesis; peptidoglycan biosynthesis. In terms of biological role, cell wall formation. This is UDP-N-acetylenolpyruvoylglucosamine reductase from Streptococcus equi subsp. zooepidemicus (strain H70).